Reading from the N-terminus, the 116-residue chain is Large ribosomal subunit protein bL19 (116 aa).

Belongs to the bacterial ribosomal protein bL19 family.

Its function is as follows. This protein is located at the 30S-50S ribosomal subunit interface and may play a role in the structure and function of the aminoacyl-tRNA binding site. This Streptomyces lividans protein is Large ribosomal subunit protein bL19 (rplS).